Consider the following 309-residue polypeptide: Carbonic anhydrase 4 (309 aa).

A signal peptide spans 1–17; that stretch reads MQLLLALLALAYVAPST. Residues 20–282 enclose the Alpha-carbonic anhydrase domain; it reads SHWCYEIQAK…LGNRQVFRSH (263 aa). Disulfide bonds link cysteine 23–cysteine 35 and cysteine 45–cysteine 226. The active-site Proton donor/acceptor is histidine 87. 3 residues coordinate Zn(2+): histidine 114, histidine 116, and histidine 139. Asparagine 193 is a glycosylation site (N-linked (GlcNAc...) asparagine). Residue 222-223 participates in substrate binding; sequence TT. Serine 281 is lipidated: GPI-anchor amidated serine. The propeptide at 282–309 is removed in mature form; sequence HASGRLLSLPLPTLLVPTLTCLVASFLH.

This sequence belongs to the alpha-carbonic anhydrase family. As to quaternary structure, interacts with SLC4A4. Requires Zn(2+) as cofactor. The N-terminus is blocked. In terms of processing, glycosylated. In terms of tissue distribution, present in kidney and lung. Also particularly abundant in brain, muscle, heart and liver. Not detected in skin or spleen.

It is found in the cell membrane. The enzyme catalyses hydrogencarbonate + H(+) = CO2 + H2O. Inhibited by acetazolamide. Its function is as follows. Catalyzes the reversible hydration of carbon dioxide into bicarbonate and protons and thus is essential to maintaining intracellular and extracellular pH. May stimulate the sodium/bicarbonate transporter activity of SLC4A4 that acts in pH homeostasis. It is essential for acid overload removal from the retina and retina epithelium, and acid release in the choriocapillaris in the choroid. This chain is Carbonic anhydrase 4 (Ca4), found in Rattus norvegicus (Rat).